We begin with the raw amino-acid sequence, 521 residues long: Fucosyltransferase 3 (521 aa).

The span at 1-12 shows a compositional bias: basic and acidic residues; that stretch reads MKRGKKNSDAGD. Residues 1–29 are disordered; sequence MKRGKKNSDAGDRLTNSDTRTGSSELNAM. At 1-39 the chain is on the cytoplasmic side; it reads MKRGKKNSDAGDRLTNSDTRTGSSELNAMMKPSLSSMKT. The segment covering 14–26 has biased composition (polar residues); sequence LTNSDTRTGSSEL. The chain crosses the membrane as a helical; Signal-anchor for type II membrane protein span at residues 40–60; the sequence is MGLLLAVLMVASVMFSLSVVL. Over 61–521 the chain is Lumenal; the sequence is RDPPSDDVIE…QATLFHGCKD (461 aa). Asn152, Asn222, and Asn493 each carry an N-linked (GlcNAc...) asparagine glycan.

It belongs to the glycosyltransferase 37 family. As to expression, expressed in roots, stems, leaves, flowers, siliques and seedlings.

The protein localises to the golgi apparatus. The protein resides in the golgi stack membrane. It participates in protein modification; protein glycosylation. Functionally, may be involved in cell wall biosynthesis. May act as a fucosyltransferase. The chain is Fucosyltransferase 3 (FUT3) from Arabidopsis thaliana (Mouse-ear cress).